A 76-amino-acid polypeptide reads, in one-letter code: Exodeoxyribonuclease 7 small subunit (76 aa).

This sequence belongs to the XseB family. In terms of assembly, heterooligomer composed of large and small subunits.

It localises to the cytoplasm. The catalysed reaction is Exonucleolytic cleavage in either 5'- to 3'- or 3'- to 5'-direction to yield nucleoside 5'-phosphates.. Functionally, bidirectionally degrades single-stranded DNA into large acid-insoluble oligonucleotides, which are then degraded further into small acid-soluble oligonucleotides. This chain is Exodeoxyribonuclease 7 small subunit, found in Methylococcus capsulatus (strain ATCC 33009 / NCIMB 11132 / Bath).